A 453-amino-acid polypeptide reads, in one-letter code: Nuclear distribution protein PAC1-2 (453 aa).

Positions 9–41 constitute a LisH domain; it reads QADELHKSIVAYLTANNLSTTAATLREELSLGE. A coiled-coil region spans residues 63-87; the sequence is VVRLQKKVMDLESRSVALQSELEHS. Residues 84–108 are disordered; the sequence is LEHSTPASLSKRKDPTSWLPRSPPR. WD repeat units lie at residues 113–154, 156–196, 200–243, 246–285, 290–350, 352–391, and 396–448; these read SHQA…RTLK, HTRA…KNTR, GHDH…CIKT, GHTG…PESK, GHEN…IKTL, GHDN…RCVK, and AHGQ…DKVV.

It belongs to the WD repeat LIS1/nudF family. In terms of assembly, self-associates. Interacts with NDL1 and dynein.

Its subcellular location is the cytoplasm. It is found in the cytoskeleton. The protein resides in the spindle pole. Positively regulates the activity of the minus-end directed microtubule motor protein dynein. May enhance dynein-mediated microtubule sliding by targeting dynein to the microtubule plus end. Required for nuclear migration during vegetative growth as well as development. Required for retrograde early endosome (EE) transport from the hyphal tip. Required for localization of dynein to the mitotic spindle poles. Recruits additional proteins to the dynein complex at SPBs. The protein is Nuclear distribution protein PAC1-2 of Chaetomium globosum (strain ATCC 6205 / CBS 148.51 / DSM 1962 / NBRC 6347 / NRRL 1970) (Soil fungus).